The primary structure comprises 287 residues: S-methyl-5'-thioadenosine phosphorylase (287 aa).

Phosphate contacts are provided by residues threonine 13 and 55–56 (RH). Methionine 186 lines the substrate pocket. Threonine 187 lines the phosphate pocket. Residue 210–212 (DYD) participates in substrate binding.

The protein belongs to the PNP/MTAP phosphorylase family. MTAP subfamily. In terms of assembly, homohexamer. Dimer of a homotrimer.

It catalyses the reaction S-methyl-5'-thioadenosine + phosphate = 5-(methylsulfanyl)-alpha-D-ribose 1-phosphate + adenine. It functions in the pathway amino-acid biosynthesis; L-methionine biosynthesis via salvage pathway; S-methyl-5-thio-alpha-D-ribose 1-phosphate from S-methyl-5'-thioadenosine (phosphorylase route): step 1/1. Functionally, catalyzes the reversible phosphorylation of S-methyl-5'-thioadenosine (MTA) to adenine and 5-methylthioribose-1-phosphate. Involved in the breakdown of MTA, a major by-product of polyamine biosynthesis. Responsible for the first step in the methionine salvage pathway after MTA has been generated from S-adenosylmethionine. Has broad substrate specificity with 6-aminopurine nucleosides as preferred substrates. The sequence is that of S-methyl-5'-thioadenosine phosphorylase from Leptospira interrogans serogroup Icterohaemorrhagiae serovar copenhageni (strain Fiocruz L1-130).